Consider the following 520-residue polypeptide: Retinoic acid receptor RXR-beta (520 aa).

The tract at residues 1–167 (MSWATRPPFL…GGSGPPEDVK (167 aa)) is disordered. The modulating stretch occupies residues 1–191 (MSWATRPPFL…PGGPGAGKRL (191 aa)). Residue R25 is modified to Omega-N-methylarginine. A compositionally biased stretch (basic and acidic residues) spans 64–79 (EAGRDGMGDSGRDSRS). The span at 95 to 118 (SSPPGPPLTPSAPPPPMPPPPLGS) shows a compositional bias: pro residues. Low complexity predominate over residues 119–130 (PFPVISSSMGSP). Residues 131–140 (GLPPPAPPGF) show a composition bias toward pro residues. NR C4-type zinc fingers lie at residues 192–212 (CAIC…CEGC) and 228–252 (CRDN…YQKC). Positions 192–257 (CAICGDRSSG…RYQKCLATGM (66 aa)) form a DNA-binding region, nuclear receptor. A hinge region spans residues 258–382 (KREAVQEERQ…HRSIDVRDGI (125 aa)). Residues 263–275 (QEERQRGKDKDGD) show a composition bias toward basic and acidic residues. Disordered stretches follow at residues 263-285 (QEER…APEE) and 300-323 (QKSD…NDPV). Residues 283 to 516 (PEEMPVDRIL…TFLMEMLEAP (234 aa)) form the NR LBD domain. A compositionally biased stretch (gly residues) spans 307-317 (EGPGATGGGGS).

Belongs to the nuclear hormone receptor family. NR2 subfamily. Homodimer (in vitro). Heterodimer with other retinoic acid receptor family members. Binds DNA preferentially as a RAR/RXR heterodimer. Interacts with NR1H3. Interacts with AKAP13. In terms of tissue distribution, in all tissues tested, including brain, thymus, spleen and liver.

It localises to the nucleus. It is found in the cytoplasm. Functionally, receptor for retinoic acid. Retinoic acid receptors bind as heterodimers to their target response elements in response to their ligands, all-trans or 9-cis retinoic acid, and regulate gene expression in various biological processes. The RAR/RXR heterodimers bind to the retinoic acid response elements (RARE). The protein is Retinoic acid receptor RXR-beta (Rxrb) of Mus musculus (Mouse).